A 485-amino-acid polypeptide reads, in one-letter code: Endo-1,4-beta-xylanase C (485 aa).

The signal sequence occupies residues 1–19; the sequence is MKFLQIIPVLLSLTSTTLA. Residues 34–234 form the GH11 domain; that stretch reads KETGNKVGTI…GNGGVSGTAD (201 aa). 2 N-linked (GlcNAc...) asparagine glycosylation sites follow: Asn56 and Asn107. Catalysis depends on Glu128, which acts as the Nucleophile. Residue Asn175 is glycosylated (N-linked (GlcNAc...) asparagine). Glu221 serves as the catalytic Proton donor. The disordered stretch occupies residues 250–450; sequence ASPAPAGGAP…PQNASDGGNC (201 aa). Low complexity-rich tracts occupy residues 265–330 and 344–354; these read AGND…QGQH and GSDFNNWSQGG. 7 repeat units span residues 275 to 280, 281 to 286, 287 to 292, 293 to 298, 299 to 304, 310 to 315, and 316 to 321. Residues 275-321 form a 7 X 6 AA tandem repeats of G-Q-Q-P-P-Q region; the sequence is GQQPPQGQQPPQGQQPPQGQQPPQGQQPPQGNDQQGQQPPQGQQPPQ. Asn349 carries an N-linked (GlcNAc...) asparagine glycan. 8 repeat units span residues 353-361, 362-370, 371-379, 380-388, 389-397, 399-407, 408-416, and 417-425. The interval 353-425 is 8 X 9 AA tandem repeats of G-G-[SN]-P-W-G-G-N-Q; it reads GGSPWGGNQG…QGGNPWGGNQ (73 aa). Positions 355 to 425 are enriched in gly residues; sequence SPWGGNQGGS…QGGNPWGGNQ (71 aa). Positions 426–445 are enriched in low complexity; the sequence is WGAPQNAAAPQSAAAPQNAS. Asn443 carries N-linked (GlcNAc...) asparagine glycosylation. Residues 449-484 enclose the CBM1 domain; it reads NCASLWGQCGGQGYNGPSCCSEGSCKPINEYFHQCQ.

This sequence belongs to the glycosyl hydrolase 11 (cellulase G) family.

It localises to the secreted. The enzyme catalyses Endohydrolysis of (1-&gt;4)-beta-D-xylosidic linkages in xylans.. The protein operates within glycan degradation; xylan degradation. Functionally, endo-1,4-beta-xylanase involved in the hydrolysis of xylan, a major structural heterogeneous polysaccharide found in plant biomass representing the second most abundant polysaccharide in the biosphere, after cellulose. The polypeptide is Endo-1,4-beta-xylanase C (xynC) (Neocallimastix patriciarum (Rumen fungus)).